A 631-amino-acid chain; its full sequence is Extracellular metalloproteinase mep (631 aa).

Residues 1–19 (MHGLRLVCSIGTLPLVILA) form the signal peptide. Positions 20–241 (YPAASLHTTS…VHGVVDYVAD (222 aa)) are excised as a propeptide. N-linked (GlcNAc...) asparagine glycosylation is found at Asn282, Asn332, and Asn364. His425 is a binding site for Zn(2+). Glu426 is an active-site residue. His429 provides a ligand contact to Zn(2+). Asn470 and Asn505 each carry an N-linked (GlcNAc...) asparagine glycan.

Belongs to the peptidase M36 family. Zn(2+) is required as a cofactor.

The protein resides in the secreted. Functionally, secreted metalloproteinase that allows assimilation of proteinaceous substrates. This chain is Extracellular metalloproteinase mep (mep), found in Aspergillus niger (strain ATCC MYA-4892 / CBS 513.88 / FGSC A1513).